A 517-amino-acid chain; its full sequence is Arp2/3 complex-activating protein rickA (517 aa).

2 disordered regions span residues 313–441 and 461–517; these read LENN…SKPA and KVSD…SFVR. Pro residues-rich tracts occupy residues 319-340 and 347-378; these read PPSPLPENNIPSPPPPPPPSPL and SSPPPPPPPPLPENNIPSPPPPPPPPPPPPMA. The region spanning 406 to 423 is the WH2 domain; the sequence is DTSDLMREIAGPKKLKKV. The tract at residues 444–477 is central and acidic domains; that stretch reads VNALSGLESIFARRAVIKVSDSSSSESDSGNWSD. The span at 463–479 shows a compositional bias: low complexity; it reads SDSSSSESDSGNWSDVS. Residues 500–517 are compositionally biased toward polar residues; that stretch reads THAQKINNRNSQNPSFVR.

In terms of assembly, homodimer.

The protein localises to the cell surface. Functionally, recruits and activates the Arp2/3 complex, which in turn leads to actin polymerization, promoting Rickettsia motility during infection. The polypeptide is Arp2/3 complex-activating protein rickA (rickA) (Rickettsia conorii (strain ATCC VR-613 / Malish 7)).